Reading from the N-terminus, the 348-residue chain is Chemokine C-C motif receptor-like 2 (348 aa).

At 1–43 (MANYTPAPEDDYDVFIEDDLSDDEIEPCTPYDPKILSAQLVPY) the chain is on the extracellular side. The chain crosses the membrane as a helical span at residues 44–64 (LYTTVFMVGLLDNILVVFILV). Residues 65-76 (KYKGLRQAENMS) lie on the Cytoplasmic side of the membrane. Residues 77-97 (FLNLALSNLGFLLTLPFWAYA) form a helical membrane-spanning segment. Over 98-110 (ASHGEGFDDPLCK) the chain is Extracellular. C109 and C187 form a disulfide bridge. A helical membrane pass occupies residues 111–131 (ILLLLYSIGLYSEAFFNVLLT). Residues 132 to 150 (VQRYKEFFHVRRRFSACRT) lie on the Cytoplasmic side of the membrane. Residues 151-171 (VAGSIFISVLVWVTATLVTLP) traverse the membrane as a helical segment. The Extracellular segment spans residues 172-204 (ELVSYKPQMQSQKYKCFFTGLHFLPADETFWKH). Residues 205 to 225 (FLTLKMNILGFLLPLFAFVYC) traverse the membrane as a helical segment. The Cytoplasmic segment spans residues 226–244 (YVRMRKTLQFRERNYGLFK). The chain crosses the membrane as a helical span at residues 245-265 (LVFTIMAVFLLMWGPYNIVLF). The Extracellular portion of the chain corresponds to 266 to 292 (LSAFNEHFSLHGCGSSYNLNKSVQITR). The N-linked (GlcNAc...) asparagine glycan is linked to N285. A helical transmembrane segment spans residues 293 to 313 (IIAATHCCVNPLLYVFLDKAF). Residues 314–348 (RKHLCHLFYLCSDTAPQPTEEPAQGASGEEYHLSS) are Cytoplasmic-facing.

This sequence belongs to the G-protein coupled receptor 1 family.

The protein localises to the cell membrane. In terms of biological role, receptor for CCL19 and chemerin/RARRES2. Does not appear to be a signaling receptor, but may have a role in modulating chemokine-triggered immune responses by capturing and internalizing CCL19 or by presenting RARRES2 ligand to CMKLR1, a functional signaling receptor. Plays a critical role for the development of Th2 responses. This is Chemokine C-C motif receptor-like 2 (CCRL2) from Bos taurus (Bovine).